We begin with the raw amino-acid sequence, 704 residues long: Polyribonucleotide nucleotidyltransferase (704 aa).

Mg(2+) contacts are provided by D491 and D497. Residues 558 to 617 (PNYAVIEINSDKIRDVIGKGGATIRQLTEDTGAVIDIDDNGTIRIFGENKAATKEAIRQI) form the KH domain. In terms of domain architecture, S1 motif spans 627–695 (GKVYKGTVAR…NRGRIKLTMK (69 aa)).

It belongs to the polyribonucleotide nucleotidyltransferase family. As to quaternary structure, component of the RNA degradosome, which is a multiprotein complex involved in RNA processing and mRNA degradation. Requires Mg(2+) as cofactor.

It is found in the cytoplasm. It catalyses the reaction RNA(n+1) + phosphate = RNA(n) + a ribonucleoside 5'-diphosphate. Its function is as follows. Involved in mRNA degradation. Catalyzes the phosphorolysis of single-stranded polyribonucleotides processively in the 3'- to 5'-direction. This is Polyribonucleotide nucleotidyltransferase from Psychrobacter sp. (strain PRwf-1).